Reading from the N-terminus, the 1205-residue chain is Bromodomain and PHD finger-containing protein 3 (1205 aa).

Disordered regions lie at residues 1–27 and 75–121; these read MRKP…KCSP and NSNK…SFRM. Position 17 is a phosphoserine (S17). Polar residues predominate over residues 75-84; it reads NSNKENSEQP. The segment covering 89–99 has biased composition (basic residues); sequence KSKKPSSKGKK. Residues 212–262 form a PHD-type 1 zinc finger; sequence DAFCCVCLDDECHNSNVILFCDICNLAVHQECYGVPYIPEGQWLCRCCLQS. A C2HC pre-PHD-type zinc finger spans residues 266 to 299; that stretch reads PVDCILCPNKGGAFKQTSDGHWAHVVCAIWIPEV. The PHD-type 2 zinc finger occupies 323–387; the sequence is LTCYICKQKG…RKTAYCEAHS (65 aa). Residues 387 to 472 are disordered; the sequence is SPPGAATARR…AGQDTPSTLP (86 aa). Residues S400 and S403 each carry the phosphoserine modification. Residues 417–432 show a composition bias toward acidic residues; the sequence is DGEEEEEEEVEEEEQE. A compositionally biased stretch (basic residues) spans 444–456; that stretch reads VPKKSKMSLKQKI. 3 positions are modified to N6-acetyllysine: K447, K449, and K671. A Bromo domain is found at 589-693; it reads LELMPFNVLL…DLGGAILRHA (105 aa). S713 and S740 each carry phosphoserine. A disordered region spans residues 779–897; that stretch reads RQKLAQPPPP…LQLGNEPLQR (119 aa). Over residues 817-827 the composition is skewed to acidic residues; it reads LQEEPEDDGDR. Residues 839–851 show a composition bias toward low complexity; the sequence is EPTGPAPSLSEQE. S900 bears the Phosphoserine mark. Disordered regions lie at residues 907–926 and 931–1015; these read LSLM…VGRR and FKKA…SECS. Basic and acidic residues predominate over residues 942-955; it reads RSPDRVLENGEDHG. A phosphoserine mark is found at S962 and S965. Positions 980–991 are enriched in basic and acidic residues; it reads SCSESEGERSPQ. Residues 1076–1159 enclose the PWWP domain; the sequence is PLELVWAKCR…RDKVLPLGVE (84 aa).

In terms of assembly, component of some HBO1 complex composed of KAT7/HBO1, MEAF6, ING4 or ING5, and BRPF3. Component of the MOZ/MORF complex composed at least of ING5, KAT6A, KAT6B, MEAF6 and one of BRPF1, BRD1/BRPF2 and BRPF3. Interacts with KAT7/HBO1; the interaction is direct.

The protein resides in the nucleus. Scaffold subunit of various histone acetyltransferase (HAT) complexes, such as the MOZ/MORF and HBO1 complexes, which have a histone H3 acetyltransferase activity. Plays a role in DNA replication initiation by directing KAT7/HBO1 specificity towards histone H3 'Lys-14' acetylation (H3K14ac), thereby facilitating the activation of replication origins. Component of the MOZ/MORF complex which has a histone H3 acetyltransferase activity. This is Bromodomain and PHD finger-containing protein 3 from Homo sapiens (Human).